We begin with the raw amino-acid sequence, 216 residues long: Small ribosomal subunit protein uS3c (216 aa).

The KH type-2 domain occupies 43-118; it reads INNYVKKNMR…KLNITITRIE (76 aa).

It belongs to the universal ribosomal protein uS3 family. As to quaternary structure, part of the 30S ribosomal subunit.

Its subcellular location is the plastid. This is Small ribosomal subunit protein uS3c (rps3) from Cuscuta reflexa (Southern Asian dodder).